The following is a 1414-amino-acid chain: MADQAKLLFYNKMMDRTAIKHLIRRLISHFGITFTANILDQIKTLGFHQATNASISLGIDDLLTAPLKSWLIQDAEKQGYSSEQHHRYGSVHSVEKLRQLIETWYATSEYLKQEMNPNFRMTDPLNPVHMMSFSGARGSISQVHQLVGMRGLMSDPQGQIIDLPIQNNFREGLSLTEYIISCYGARKGVVDTAVRTSDAGYLTRRLVEVVQHIVVRKKDCGTLRGILLNSNRDGRRSIQPFSQQRLIGRVLADNLYVNMRCIATRNQDISNELARRLVISQVRQIYIRSPLTCKSMFCICQLCYGWNLTYNHLVELGEAVGIIAGQSIGEPGTQLTLRTFHTGGVFTGDIAEHIRTPFNGIIKFDEDLVYATRTRHGHPAWLCQDNLPVSIESKEKIHNFIVPAQSLLLVQNNQYVGSKQVIGQIRTTKSPLKERVKKPIYSNLDGELHWDTTVRHLSEHIHNNIHRVVKSGHIWILSGKLHNLSKTSLFFYQNQDKIHVQSPSITNYKSLPNSSEKDTKRDLDFIDSNIAKKESQTSNFGFSFSKITPNPSDSTNILSNIELKRNRRKNRVILLLGRVKSRYRKKSYSSFVLDIPNNGILNQGDILAISESPQYQTEISGIIKYGTIKVDSVGKREYIGDNEKTTTFRSRYKILKGGNFFLIPEEVYTIYQPSSHIFVSNNSIIEPGTQITFNITSRGGGLVQIKKVRKIFEIRILPGNIYYPKRLHKISKQTDILIPPGQKIFDEFKSDNWIYLQWITPYRKKTFLPVRPVLEYIISNHSFIEISSTFTYSRYRDIIQVQAAEYIFYEDGEEVRIRNNTSSIQLVQTCLVVNWKEPSIVRVAYVSPIEIRFNNILKTFLQISLIEFSNAYVEKGNSRASLKRLFSNQPFYSNNANNHLLSQFPINHPGVVRRLSDQGTDRSFVVLLPSDSYQSFYSPCHDGRNRRKQFVESRYKISFCEKEISERSNTLFLSFNRKKFLKLKEKLTNSFSSFDHHCMMQTTERLGLLGTVHSIAHYSLYSHRIINKNFFLSKDLDIDNSRAISQNSNWYILDENRVICGFDLIDSTQEDLSNRPHYLSVPCDVIIPFVNLGQFICEGVSLYEHETSYQSGQIIAIYQESVMIRLSKPYLATKGATVHSNYGDILKEGDTLITLIYERLRSGDIIQGLPKVEQLLEARSINSVSLDLEKNFLFWNNTMIRLVGNFWSHFLGVKTSIEQCQLFLVNKVQKVYRSQGVQISDKHIEIIVRQMTSKVITLEDGMANVFSPGELIELSRAQRMNRALKESISHKPIVLGMTKASLNTTSFISEASFQETTRVLARAALQGRIDWLKGLKENVVPGSVVPTGTGSREVICQIDIEKRKELGLLKTKNNKIFIRKIRDIFFYHEKVSISKNPKYIHMRLKKPVLKEINI.

Positions 220, 293, 300, and 303 each coordinate Zn(2+).

The protein belongs to the RNA polymerase beta' chain family. RpoC2 subfamily. As to quaternary structure, in plastids the minimal PEP RNA polymerase catalytic core is composed of four subunits: alpha, beta, beta', and beta''. When a (nuclear-encoded) sigma factor is associated with the core the holoenzyme is formed, which can initiate transcription. Zn(2+) serves as cofactor.

The protein resides in the plastid. The protein localises to the chloroplast. The catalysed reaction is RNA(n) + a ribonucleoside 5'-triphosphate = RNA(n+1) + diphosphate. DNA-dependent RNA polymerase catalyzes the transcription of DNA into RNA using the four ribonucleoside triphosphates as substrates. This is DNA-directed RNA polymerase subunit beta'' from Angiopteris evecta (Mule's foot fern).